The primary structure comprises 298 residues: Glutamyl-Q tRNA(Asp) synthetase (298 aa).

Residues 12 to 16 (RFAPT) and glutamate 48 contribute to the L-glutamate site. The short motif at 15–25 (PTPSGYLHFGS) is the 'HIGH' region element. 4 residues coordinate Zn(2+): cysteine 104, cysteine 106, tyrosine 118, and cysteine 122. Tyrosine 175 and arginine 193 together coordinate L-glutamate. The short motif at 231-235 (KLGKS) is the 'KMSKS' region element. Lysine 234 contributes to the ATP binding site.

It belongs to the class-I aminoacyl-tRNA synthetase family. GluQ subfamily. Requires Zn(2+) as cofactor.

Catalyzes the tRNA-independent activation of glutamate in presence of ATP and the subsequent transfer of glutamate onto a tRNA(Asp). Glutamate is transferred on the 2-amino-5-(4,5-dihydroxy-2-cyclopenten-1-yl) moiety of the queuosine in the wobble position of the QUC anticodon. The protein is Glutamyl-Q tRNA(Asp) synthetase of Pseudomonas fluorescens (strain ATCC BAA-477 / NRRL B-23932 / Pf-5).